We begin with the raw amino-acid sequence, 229 residues long: Lipoprotein-releasing system ATP-binding protein LolD (229 aa).

An ABC transporter domain is found at 9–228 (HGLRKIYREA…QDGNLVQVEV (220 aa)). Residue 42–49 (GSSGSGKS) participates in ATP binding.

It belongs to the ABC transporter superfamily. Lipoprotein translocase (TC 3.A.1.125) family. The complex is composed of two ATP-binding proteins (LolD) and two transmembrane proteins (LolC and LolE).

The protein resides in the cell inner membrane. Functionally, part of the ABC transporter complex LolCDE involved in the translocation of mature outer membrane-directed lipoproteins, from the inner membrane to the periplasmic chaperone, LolA. Responsible for the formation of the LolA-lipoprotein complex in an ATP-dependent manner. The sequence is that of Lipoprotein-releasing system ATP-binding protein LolD from Photobacterium profundum (strain SS9).